A 334-amino-acid polypeptide reads, in one-letter code: Cyclin N-terminal domain-containing protein 1 (334 aa).

The 152-residue stretch at Asn29 to Asn180 folds into the Cyclin N-terminal domain.

As to quaternary structure, interacts with PRR19; this interaction promotes crossover formation. Interacts with RFC3 and RFC4; these interactions facilitate crossover formation. Interacts with CDC34; this interaction regulates the cell-cycle progression. Isoform 2 is expressed in spermatocyte.

The protein resides in the nucleus. It is found in the cytoplasm. Its subcellular location is the chromosome. Functionally, plays a role in the different steps of crossover formation during meiotic recombination. Participates in the crossover differentiation step of crossover-specific recombination intermediates through its interaction with PRR19. In addition, stimulates crossover formation through the interactions with RFC3 and RFC4 and simultaneously regulates cell-cycle progression through interactions with CDC34 and subsequent ubiquitination of WEE1. May also participates in an active deselection process that destabilizes or removes excess pre-CO intermediates. This Mus musculus (Mouse) protein is Cyclin N-terminal domain-containing protein 1.